The following is a 146-amino-acid chain: uncharacterized protein (146 aa).

The protein belongs to the BlaI transcriptional regulatory family.

This is an uncharacterized protein from Latilactobacillus sakei (Lactobacillus sakei).